The chain runs to 251 residues: NADPH-dependent oxidoreductase (251 aa).

It belongs to the flavin oxidoreductase frp family. FMN serves as cofactor.

Functionally, reduces FMN, organic nitro compounds and disulfide DTNB. Involved in maintenance of the cellular redox state and the disulfide stress response. This Staphylococcus epidermidis (strain ATCC 12228 / FDA PCI 1200) protein is NADPH-dependent oxidoreductase (nfrA).